We begin with the raw amino-acid sequence, 550 residues long: Probable acyl-activating enzyme 6 (550 aa).

Belongs to the ATP-dependent AMP-binding enzyme family. As to expression, expressed at low levels in roots, leaves, stems and developing seeds.

Functionally, may act as an acid--thiol ligase that activates carboxylic acids by forming acyl-CoAs. This chain is Probable acyl-activating enzyme 6 (AAE6), found in Arabidopsis thaliana (Mouse-ear cress).